We begin with the raw amino-acid sequence, 426 residues long: MMSGRMNAAGDESPFPFGAMQAPGPGAYVGFDHGAAAVAAAAAAAQRAGMLQHHHHHMYDGLDFAAAMQFGGGQDAPPHPQLLALPPSMAAPPPPPMPMPLQMPMTMPMPGDVYPALGIVKREGGGGGQDAAAGRIGLNLGRRTYFSPGDMLAVDRLLMRSRLGGVFGLGFGGAHHQPPRCQAEGCKADLSGAKHYHRRHKVCEYHAKASVVAASGKQQRFCQQCSRFHVLTEFDEAKRSCRKRLAEHNRRRRKPAAAATTAVAAAKDAAAAPVAAGKKPSGGAATSYTGDNKNVVSMSAAKSPISSNTSVISCLPEQGKHAAAAARPTALTLGGAPPHESSAPQIGAMLHHHHHHQQDHMQVSSLVHINGGGGGGSNNILSCSSVCSSALPSTATNGEVSDQNNDNSHNNGGNNNNMHLFEVDFM.

An SBP-type zinc finger spans residues 178–255; the sequence is PPRCQAEGCK…AEHNRRRRKP (78 aa). Zn(2+)-binding residues include Cys181, Cys186, Cys203, His206, Cys222, Cys225, His229, and Cys241. Positions 238–254 match the Bipartite nuclear localization signal motif; it reads KRSCRKRLAEHNRRRRK. Composition is skewed to low complexity over residues 268–287 and 401–417; these read DAAAAPVAAGKKPSGGAATS and SDQNNDNSHNNGGNNNN. 2 disordered regions span residues 268-290 and 392-426; these read DAAAAPVAAGKKPSGGAATSYTG and PSTATNGEVSDQNNDNSHNNGGNNNNMHLFEVDFM.

Expressed in stems, leaf sheaths, and young panicles.

Its subcellular location is the nucleus. Functionally, trans-acting factor that binds specifically to the consensus nucleotide sequence 5'-TNCGTACAA-3'. The protein is Squamosa promoter-binding-like protein 10 (SPL10) of Oryza sativa subsp. indica (Rice).